Here is a 539-residue protein sequence, read N- to C-terminus: Chaperonin GroEL (539 aa).

Residues 30–33, Lys-51, 87–91, Gly-415, 479–481, and Asp-495 contribute to the ATP site; these read TLGP, DGTTT, and NAA.

Belongs to the chaperonin (HSP60) family. Forms a cylinder of 14 subunits composed of two heptameric rings stacked back-to-back. Interacts with the co-chaperonin GroES.

The protein resides in the cytoplasm. It catalyses the reaction ATP + H2O + a folded polypeptide = ADP + phosphate + an unfolded polypeptide.. Its function is as follows. Together with its co-chaperonin GroES, plays an essential role in assisting protein folding. The GroEL-GroES system forms a nano-cage that allows encapsulation of the non-native substrate proteins and provides a physical environment optimized to promote and accelerate protein folding. The polypeptide is Chaperonin GroEL (Enterobacter asburiae).